Consider the following 377-residue polypeptide: Succinyl-diaminopimelate desuccinylase (377 aa).

H68 lines the Zn(2+) pocket. Residue D70 is part of the active site. A Zn(2+)-binding site is contributed by D101. The active-site Proton acceptor is E135. Zn(2+)-binding residues include E136, E164, and H350.

Belongs to the peptidase M20A family. DapE subfamily. In terms of assembly, homodimer. Requires Zn(2+) as cofactor. Co(2+) serves as cofactor.

It catalyses the reaction N-succinyl-(2S,6S)-2,6-diaminopimelate + H2O = (2S,6S)-2,6-diaminopimelate + succinate. Its pathway is amino-acid biosynthesis; L-lysine biosynthesis via DAP pathway; LL-2,6-diaminopimelate from (S)-tetrahydrodipicolinate (succinylase route): step 3/3. Catalyzes the hydrolysis of N-succinyl-L,L-diaminopimelic acid (SDAP), forming succinate and LL-2,6-diaminopimelate (DAP), an intermediate involved in the bacterial biosynthesis of lysine and meso-diaminopimelic acid, an essential component of bacterial cell walls. In Acinetobacter baylyi (strain ATCC 33305 / BD413 / ADP1), this protein is Succinyl-diaminopimelate desuccinylase.